A 236-amino-acid polypeptide reads, in one-letter code: Orotidine 5'-phosphate decarboxylase (236 aa).

Residues Asp11, Lys33, 60 to 69, Thr119, Arg181, Gln190, Gly210, and Arg211 contribute to the substrate site; that span reads DLKLHDIPNT. Catalysis depends on Lys62, which acts as the Proton donor.

The protein belongs to the OMP decarboxylase family. Type 1 subfamily. Homodimer.

The enzyme catalyses orotidine 5'-phosphate + H(+) = UMP + CO2. It participates in pyrimidine metabolism; UMP biosynthesis via de novo pathway; UMP from orotate: step 2/2. Functionally, catalyzes the decarboxylation of orotidine 5'-monophosphate (OMP) to uridine 5'-monophosphate (UMP). The sequence is that of Orotidine 5'-phosphate decarboxylase from Cutibacterium acnes (strain DSM 16379 / KPA171202) (Propionibacterium acnes).